Here is a 61-residue protein sequence, read N- to C-terminus: Large ribosomal subunit protein eL29y (61 aa).

The disordered stretch occupies residues 1–61 (MAKSKNHTAH…KSGENAGVEE (61 aa)). A compositionally biased stretch (basic residues) spans 15–31 (KAHKNGIKKPRRHRHTP).

Belongs to the eukaryotic ribosomal protein eL29 family.

In Arabidopsis thaliana (Mouse-ear cress), this protein is Large ribosomal subunit protein eL29y (RPL29B).